An 820-amino-acid polypeptide reads, in one-letter code: G-type lectin S-receptor-like serine/threonine-protein kinase At1g11300 (820 aa).

An N-terminal signal peptide occupies residues 1–26 (MRLHESSSPFVCILVLSCFFLSVSLA). A Bulb-type lectin domain is found at 27–150 (QERAFFSGKL…SSDAYLWESF (124 aa)). At 27-436 (QERAFFSGKL…SEIKTKDKRP (410 aa)) the chain is on the extracellular side. Asn37, Asn58, Asn87, Asn115, Asn123, Asn173, Asn211, Asn247, Asn256, and Asn282 each carry an N-linked (GlcNAc...) asparagine glycan. An EGF-like; atypical domain is found at 290-326 (PATECDNYRRCGEFATCNPRKNPLCSCIRGFRPRNLI). 2 disulfide bridges follow: Cys294–Cys306 and Cys300–Cys314. 2 N-linked (GlcNAc...) asparagine glycosylation sites follow: Asn332 and Asn351. Residues 345–425 (CERQNNNGSA…SGLDLYIRLA (81 aa)) enclose the PAN domain. Intrachain disulfides connect Cys379/Cys400 and Cys383/Cys389. N-linked (GlcNAc...) asparagine glycosylation occurs at Asn404. A helical transmembrane segment spans residues 437–457 (ILIGTILAGGIFVVAACVLLA). Topologically, residues 458 to 820 (RRIVMKKRAK…NVTITDVTGR (363 aa)) are cytoplasmic. Residues 509–788 (FSLRNKLGQG…DIPEPKQPAF (280 aa)) enclose the Protein kinase domain. ATP contacts are provided by residues 515 to 523 (LGQGGFGPV) and Lys537. Residues 598–615 (RRAKLLDWKTRFNIINGI) are caM-binding. The Proton acceptor role is filled by Asp634.

This sequence belongs to the protein kinase superfamily. Ser/Thr protein kinase family.

The protein resides in the cell membrane. It carries out the reaction L-seryl-[protein] + ATP = O-phospho-L-seryl-[protein] + ADP + H(+). It catalyses the reaction L-threonyl-[protein] + ATP = O-phospho-L-threonyl-[protein] + ADP + H(+). The sequence is that of G-type lectin S-receptor-like serine/threonine-protein kinase At1g11300 from Arabidopsis thaliana (Mouse-ear cress).